Here is a 540-residue protein sequence, read N- to C-terminus: MYYLNKMLEYNKENGIIINKYIRKTIQKQIRIHNKYIYRYDRVTQAIEWIEDNFYLTTGNLMKIELLPTQRWWYELMLGYDMIDEKGVQVNLINEIFLNLGRGSGKSSLMATRVLNWMILGGQYGGESLVIAYDNTQARHVFDQVRNQTEASDTLRVYNENKIFKSTKQGLEFTSFKTTFKKQTNDTLRAQGGNSSLNIFDEVHTYGEDITESVNKGSRQKQDNWQSIYITSGGLKRDGLYDKLVERFKSEEEFYNDRSFGLLYMLENHEQVKDKKNWTMALPLIGSVPKWSGVIEEYELAQGDPALQNKFLAFNMGLPMQDTAYYFTPQDTKLTDFNLSVFNKNRTYVGIDLSLIGDLTAVSFVCELEGKTYSHTLTFSVRSQYEQLDTEQQELWTEFVDRGELILLDTEYINVNDLIPHINDFRTKTGCRLRKIGYDPARYEILKGLIERYFFDKDGDNQRAIRQGFSMNDYIKLLKSKLAENKLIHNQKVMQWALNNTAVKIGQSGDYMYTKKLEKDKIDPTVALTMALEMAVSDEV.

Positions 352, 424, and 523 each coordinate Mn(2+).

It belongs to the skunavirus terminase large subunit family. In terms of assembly, interacts with the terminase small subunit; the active complex is probably heterooligomeric. It depends on Mn(2+) as a cofactor. Mg(2+) is required as a cofactor.

Its function is as follows. Probable terminase large subunit. The terminase large subunit acts as an ATP driven molecular motor necessary for viral DNA translocation into empty capsids and as an endonuclease that cuts the viral genome to initiate and to end a packaging reaction. The terminase lies at a unique vertex of the procapsid and is composed of two subunits, a small terminase subunit involved in viral DNA recognition (packaging sequence), and a large terminase subunit possessing endonucleolytic and ATPase activities. Both terminase subunits heterooligomerize and are docked on the portal protein to form the packaging machine. The terminase large subunit exhibits endonuclease activity and cleaves the viral genome concatemer. The protein is Terminase large subunit of Lactococcus lactis (Lactococcus lactis bacteriophage p2).